Reading from the N-terminus, the 764-residue chain is Mitogen-activated protein kinase kinase kinase 1b (764 aa).

Disordered stretches follow at residues 1-81 (MVEE…IQQQ), 120-260 (KSIA…TATR), 325-348 (PNLAEEAESSAKPESSAIPDSSAM), and 360-392 (VPELSAKPESNAKPESEPEQDSSVEARTEHYGS). A compositionally biased stretch (gly residues) spans 14–30 (GSWGSGEDGGSSHGGKG). Composition is skewed to low complexity over residues 60–76 (VHSTSSSGSRRNPLSKS) and 125–135 (SQPLSSPSLSQ). Positions 136 to 145 (EHGEASHSND) are enriched in basic and acidic residues. Residues 184-201 (YVNSQPQNHYGRKNSPSQ) show a composition bias toward polar residues. Residues 431-684 (WFKGDFIGSG…CDMLLTHPFI (254 aa)) enclose the Protein kinase domain. ATP-binding positions include 437 to 445 (IGSGTFGSV) and Lys459. Asp554 serves as the catalytic Proton acceptor. The interval 706–764 (EERSIDVSESPSIATSSQSGSSPSVAGDAVSPASVAVRPRSMRTLRSEFSMSSPESIAS) is disordered. Low complexity predominate over residues 715–729 (SPSIATSSQSGSSPS). Residues 752–764 (SEFSMSSPESIAS) are compositionally biased toward polar residues.

It belongs to the protein kinase superfamily. STE Ser/Thr protein kinase family. MAP kinase kinase kinase subfamily.

The protein resides in the cell membrane. The catalysed reaction is L-seryl-[protein] + ATP = O-phospho-L-seryl-[protein] + ADP + H(+). It catalyses the reaction L-threonyl-[protein] + ATP = O-phospho-L-threonyl-[protein] + ADP + H(+). Its function is as follows. The CERK1, MEKK1a/b, MKK1a/b/c and MPK4a/b proteins are involved in pathogen defense. The pathway induces rapid growth inhibition, cell wall depositions and accumulation of defense-related transcripts. This protein is required for responses to chitin and acts redundantly with MEKK1a. This chain is Mitogen-activated protein kinase kinase kinase 1b (MEKK1b), found in Physcomitrium patens (Spreading-leaved earth moss).